A 317-amino-acid chain; its full sequence is Acetyl-coenzyme A carboxylase carboxyl transferase subunit alpha (317 aa).

The CoA carboxyltransferase C-terminal domain maps to 40-293 (LEVRVREAIV…GDVIASALAE (254 aa)).

Belongs to the AccA family. In terms of assembly, acetyl-CoA carboxylase is a heterohexamer composed of biotin carboxyl carrier protein (AccB), biotin carboxylase (AccC) and two subunits each of ACCase subunit alpha (AccA) and ACCase subunit beta (AccD).

It is found in the cytoplasm. It catalyses the reaction N(6)-carboxybiotinyl-L-lysyl-[protein] + acetyl-CoA = N(6)-biotinyl-L-lysyl-[protein] + malonyl-CoA. The protein operates within lipid metabolism; malonyl-CoA biosynthesis; malonyl-CoA from acetyl-CoA: step 1/1. Its function is as follows. Component of the acetyl coenzyme A carboxylase (ACC) complex. First, biotin carboxylase catalyzes the carboxylation of biotin on its carrier protein (BCCP) and then the CO(2) group is transferred by the carboxyltransferase to acetyl-CoA to form malonyl-CoA. In Rhizobium johnstonii (strain DSM 114642 / LMG 32736 / 3841) (Rhizobium leguminosarum bv. viciae), this protein is Acetyl-coenzyme A carboxylase carboxyl transferase subunit alpha.